Reading from the N-terminus, the 225-residue chain is Cytochrome c oxidase subunit 2 (225 aa).

Over 1-25 (MSTWFMFMFQESNSYYADNLISFHN) the chain is Mitochondrial intermembrane. A helical membrane pass occupies residues 26 to 47 (MVMMIIIMISTLTVYIILDLFM). The Mitochondrial matrix segment spans residues 48–62 (NKFSNLFLLKNHNIE). A helical transmembrane segment spans residues 63–82 (IIWTIIPIIILLIICFPSLK). Residues 83–225 (ILYLIDEIVN…YFLNWVNKQI (143 aa)) are Mitochondrial intermembrane-facing. Residues H159, C194, E196, C198, H202, and M205 each contribute to the Cu cation site. Mg(2+) is bound at residue E196.

This sequence belongs to the cytochrome c oxidase subunit 2 family. As to quaternary structure, component of the cytochrome c oxidase (complex IV, CIV), a multisubunit enzyme composed of a catalytic core of 3 subunits and several supernumerary subunits. The complex exists as a monomer or a dimer and forms supercomplexes (SCs) in the inner mitochondrial membrane with ubiquinol-cytochrome c oxidoreductase (cytochrome b-c1 complex, complex III, CIII). Cu cation serves as cofactor.

The protein localises to the mitochondrion inner membrane. The catalysed reaction is 4 Fe(II)-[cytochrome c] + O2 + 8 H(+)(in) = 4 Fe(III)-[cytochrome c] + 2 H2O + 4 H(+)(out). In terms of biological role, component of the cytochrome c oxidase, the last enzyme in the mitochondrial electron transport chain which drives oxidative phosphorylation. The respiratory chain contains 3 multisubunit complexes succinate dehydrogenase (complex II, CII), ubiquinol-cytochrome c oxidoreductase (cytochrome b-c1 complex, complex III, CIII) and cytochrome c oxidase (complex IV, CIV), that cooperate to transfer electrons derived from NADH and succinate to molecular oxygen, creating an electrochemical gradient over the inner membrane that drives transmembrane transport and the ATP synthase. Cytochrome c oxidase is the component of the respiratory chain that catalyzes the reduction of oxygen to water. Electrons originating from reduced cytochrome c in the intermembrane space (IMS) are transferred via the dinuclear copper A center (CU(A)) of subunit 2 and heme A of subunit 1 to the active site in subunit 1, a binuclear center (BNC) formed by heme A3 and copper B (CU(B)). The BNC reduces molecular oxygen to 2 water molecules using 4 electrons from cytochrome c in the IMS and 4 protons from the mitochondrial matrix. The chain is Cytochrome c oxidase subunit 2 (COII) from Apis mellifera ligustica (Common honeybee).